The following is a 169-amino-acid chain: Ribosome maturation factor RimM (169 aa).

The PRC barrel domain occupies 97 to 169 (PGEYYWYQLI…VITVDWDMNF (73 aa)).

This sequence belongs to the RimM family. As to quaternary structure, binds ribosomal protein uS19.

Its subcellular location is the cytoplasm. Its function is as follows. An accessory protein needed during the final step in the assembly of 30S ribosomal subunit, possibly for assembly of the head region. Essential for efficient processing of 16S rRNA. May be needed both before and after RbfA during the maturation of 16S rRNA. It has affinity for free ribosomal 30S subunits but not for 70S ribosomes. In Legionella pneumophila subsp. pneumophila (strain Philadelphia 1 / ATCC 33152 / DSM 7513), this protein is Ribosome maturation factor RimM.